The chain runs to 148 residues: Flavodoxin (148 aa).

The Flavodoxin-like domain occupies 4-145 (VLILFGSSTG…AVSAFAEDVL (142 aa)).

It belongs to the flavodoxin family. FMN serves as cofactor.

Its function is as follows. Low-potential electron donor to a number of redox enzymes. The polypeptide is Flavodoxin (Desulfovibrio desulfuricans (strain ATCC 27774 / DSM 6949 / MB)).